The following is a 272-amino-acid chain: Plastid division protein PDV1 (272 aa).

Residues 1–206 are Cytoplasmic-facing; that stretch reads MGEMEIEEIE…KRALGFNHVK (206 aa). The interval 40–61 is disordered; sequence KPSNRSEKRKNPHGNSGEDKRP. The stretch at 78–102 forms a coiled coil; it reads IQEAKSLNAIRTALENLEDQLEFFH. A helical membrane pass occupies residues 207 to 225; that stretch reads GVLGNAAIFAISVVAMLHL. Residues 226–272 are Chloroplast intermembrane-facing; that stretch reads HQVATSEHHLQKKEDRFYRSQQRKTYGRDKSSADRSLDHLDVMMARG.

Interacts (via C-terminus) with CDP1/PARC6 (via C-terminus). Interacts with ARC5/DRP5B. As to expression, expressed in young developing leaves, root tips, shoot apices, and flower buds (sepals, petals, stamens, and pistils), but not in developed tissues.

It is found in the plastid. It localises to the chloroplast outer membrane. In terms of biological role, component of the plastid division machinery. Required to mediate the dissociation of ARC5/DRP5B from plastid outer envelope membranes (OEMs) at the midplastid constriction site in the cytoplasm, thus triggering ARC5/DRP5B ring turnover at the chloroplast division site. Binding to phosphatidylinositol 4-phosphate (PI4P) modulates negatively chloroplast division. This is Plastid division protein PDV1 from Arabidopsis thaliana (Mouse-ear cress).